Here is a 141-residue protein sequence, read N- to C-terminus: Nucleoside diphosphate kinase (141 aa).

ATP-binding residues include lysine 11, phenylalanine 59, arginine 87, threonine 93, arginine 104, and asparagine 114. The Pros-phosphohistidine intermediate role is filled by histidine 117.

This sequence belongs to the NDK family. In terms of assembly, homotetramer. The cofactor is Mg(2+).

Its subcellular location is the cytoplasm. It catalyses the reaction a 2'-deoxyribonucleoside 5'-diphosphate + ATP = a 2'-deoxyribonucleoside 5'-triphosphate + ADP. The catalysed reaction is a ribonucleoside 5'-diphosphate + ATP = a ribonucleoside 5'-triphosphate + ADP. Major role in the synthesis of nucleoside triphosphates other than ATP. The ATP gamma phosphate is transferred to the NDP beta phosphate via a ping-pong mechanism, using a phosphorylated active-site intermediate. This chain is Nucleoside diphosphate kinase, found in Burkholderia multivorans (strain ATCC 17616 / 249).